Here is a 123-residue protein sequence, read N- to C-terminus: Prismalin-14 (123 aa).

An N-terminal signal peptide occupies residues 1 to 16; that stretch reads MRSLLVLLALAACASA.

Prismatic layer of shell (at protein level). Expressed primarily in the mantle with highest level in the mantle edge and lower level in the mantle pallium.

It is found in the secreted. Functionally, may be involved in calcification of the prismatic layer of the shell. This chain is Prismalin-14, found in Margaritifera margaritifera (Freshwater pearl mussel).